We begin with the raw amino-acid sequence, 313 residues long: Porphobilinogen deaminase (313 aa).

S-(dipyrrolylmethanemethyl)cysteine is present on C241.

It belongs to the HMBS family. In terms of assembly, monomer. Requires dipyrromethane as cofactor.

The enzyme catalyses 4 porphobilinogen + H2O = hydroxymethylbilane + 4 NH4(+). It participates in porphyrin-containing compound metabolism; protoporphyrin-IX biosynthesis; coproporphyrinogen-III from 5-aminolevulinate: step 2/4. Functionally, tetrapolymerization of the monopyrrole PBG into the hydroxymethylbilane pre-uroporphyrinogen in several discrete steps. This Bacillus velezensis (strain DSM 23117 / BGSC 10A6 / LMG 26770 / FZB42) (Bacillus amyloliquefaciens subsp. plantarum) protein is Porphobilinogen deaminase.